A 378-amino-acid polypeptide reads, in one-letter code: Squalene methyltransferase 1 (378 aa).

Residues 17–37 traverse the membrane as a helical segment; it reads LLTWKGVAGLVVAITLGYLII.

The protein belongs to the class I-like SAM-binding methyltransferase superfamily. Erg6/SMT family.

Its subcellular location is the microsome membrane. The catalysed reaction is squalene + 2 S-adenosyl-L-methionine = 3,22-dimethyl-1,2,23,24-tetradehydro-2,3,22,23-tetrahydrosqualene + 2 S-adenosyl-L-homocysteine + 2 H(+). In terms of biological role, converts squalene to mono- and dimethyl derivatives, but not to tri- and tetramethylated products. Unable to methylate cycloartenol, zymosterol or lanosterol. Methylates both C-3 and C22 positions, but only C-3 position in monomethylated products. Produces mainly dimethylated squalene. This chain is Squalene methyltransferase 1 (TMT-1), found in Botryococcus braunii (Green alga).